The primary structure comprises 473 residues: Photosystem II CP43 reaction center protein (473 aa).

The propeptide occupies 1-14 (MKTLYSLRRFYPVE). T15 is modified (N-acetylthreonine). T15 bears the Phosphothreonine mark. 5 helical membrane passes run 69–93 (LFEV…PHLA), 134–155 (LIGP…KDRS), 178–200 (KALY…RKIT), 255–275 (KPFA…LSYS), and 291–312 (WFNN…ASQA). E367 contributes to the [CaMn4O5] cluster binding site. Residues 447 to 471 (RARAAAAGFEKGIDRDFEPVLSMNP) form a helical membrane-spanning segment.

The protein belongs to the PsbB/PsbC family. PsbC subfamily. PSII is composed of 1 copy each of membrane proteins PsbA, PsbB, PsbC, PsbD, PsbE, PsbF, PsbH, PsbI, PsbJ, PsbK, PsbL, PsbM, PsbT, PsbX, PsbY, PsbZ, Psb30/Ycf12, at least 3 peripheral proteins of the oxygen-evolving complex and a large number of cofactors. It forms dimeric complexes. It depends on Binds multiple chlorophylls and provides some of the ligands for the Ca-4Mn-5O cluster of the oxygen-evolving complex. It may also provide a ligand for a Cl- that is required for oxygen evolution. PSII binds additional chlorophylls, carotenoids and specific lipids. as a cofactor.

The protein localises to the plastid. It localises to the chloroplast thylakoid membrane. Its function is as follows. One of the components of the core complex of photosystem II (PSII). It binds chlorophyll and helps catalyze the primary light-induced photochemical processes of PSII. PSII is a light-driven water:plastoquinone oxidoreductase, using light energy to abstract electrons from H(2)O, generating O(2) and a proton gradient subsequently used for ATP formation. This is Photosystem II CP43 reaction center protein from Cycas taitungensis (Prince sago).